The following is a 130-amino-acid chain: Protein ApaG (130 aa).

The ApaG domain occupies 3–127 (KAETRGISVI…FSLDVPHMRR (125 aa)).

The protein is Protein ApaG of Methylobacterium nodulans (strain LMG 21967 / CNCM I-2342 / ORS 2060).